Reading from the N-terminus, the 345-residue chain is Phosphoribosylformylglycinamidine cyclo-ligase (345 aa).

The protein belongs to the AIR synthase family.

It localises to the cytoplasm. It carries out the reaction 2-formamido-N(1)-(5-O-phospho-beta-D-ribosyl)acetamidine + ATP = 5-amino-1-(5-phospho-beta-D-ribosyl)imidazole + ADP + phosphate + H(+). Its pathway is purine metabolism; IMP biosynthesis via de novo pathway; 5-amino-1-(5-phospho-D-ribosyl)imidazole from N(2)-formyl-N(1)-(5-phospho-D-ribosyl)glycinamide: step 2/2. The polypeptide is Phosphoribosylformylglycinamidine cyclo-ligase (Shewanella sediminis (strain HAW-EB3)).